The following is a 338-amino-acid chain: S-adenosylmethionine:tRNA ribosyltransferase-isomerase (338 aa).

Belongs to the QueA family. As to quaternary structure, monomer.

The protein resides in the cytoplasm. The enzyme catalyses 7-aminomethyl-7-carbaguanosine(34) in tRNA + S-adenosyl-L-methionine = epoxyqueuosine(34) in tRNA + adenine + L-methionine + 2 H(+). The protein operates within tRNA modification; tRNA-queuosine biosynthesis. In terms of biological role, transfers and isomerizes the ribose moiety from AdoMet to the 7-aminomethyl group of 7-deazaguanine (preQ1-tRNA) to give epoxyqueuosine (oQ-tRNA). The sequence is that of S-adenosylmethionine:tRNA ribosyltransferase-isomerase from Francisella philomiragia subsp. philomiragia (strain ATCC 25017 / CCUG 19701 / FSC 153 / O#319-036).